Reading from the N-terminus, the 625-residue chain is Chaperone protein HtpG (625 aa).

The interval 1–332 is a; substrate-binding; that stretch reads MSKKTNAPVQ…TEDLSLNVSR (332 aa). The segment at 333-545 is b; that stretch reads EVVQSSPVMA…KDAMDSQMER (213 aa). The tract at residues 546 to 625 is c; it reads MMKMMQQEMP…ELIEAATLSR (80 aa).

The protein belongs to the heat shock protein 90 family. In terms of assembly, homodimer.

It is found in the cytoplasm. Functionally, molecular chaperone. Has ATPase activity. This is Chaperone protein HtpG from Chlorobium phaeovibrioides (strain DSM 265 / 1930) (Prosthecochloris vibrioformis (strain DSM 265)).